Reading from the N-terminus, the 499-residue chain is Putative sperm motility kinase W (499 aa).

The Protein kinase domain occupies tyrosine 14 to valine 262. ATP contacts are provided by residues leucine 20–valine 28 and lysine 43. The active-site Proton acceptor is aspartate 133. Residues aspartate 274–alanine 314 form the UBA domain.

It belongs to the protein kinase superfamily. CAMK Ser/Thr protein kinase family. Smok subfamily.

The enzyme catalyses L-seryl-[protein] + ATP = O-phospho-L-seryl-[protein] + ADP + H(+). The catalysed reaction is L-threonyl-[protein] + ATP = O-phospho-L-threonyl-[protein] + ADP + H(+). Its function is as follows. May play a role in sperm motility, especially in the regulation of flagellar function. In Mus musculus (Mouse), this protein is Putative sperm motility kinase W.